Here is a 475-residue protein sequence, read N- to C-terminus: Putative aldehyde dehydrogenase (475 aa).

NAD(+) contacts are provided by residues 146-147 (WN) and 223-224 (GS). E245 acts as the Proton acceptor in catalysis. L246 is an NAD(+) binding site. Residue C279 is the Nucleophile of the active site. An NAD(+)-binding site is contributed by E379.

It belongs to the aldehyde dehydrogenase family.

The enzyme catalyses an aldehyde + NAD(+) + H2O = a carboxylate + NADH + 2 H(+). This Staphylococcus aureus (strain USA300) protein is Putative aldehyde dehydrogenase.